A 152-amino-acid polypeptide reads, in one-letter code: Neuromedin-S (152 aa).

Residues Met-1–Gly-26 form the signal peptide. 3 propeptides span residues Ala-27–Arg-69, Phe-70–Arg-105, and Met-106–Arg-108. Residue Asn-144 is modified to Asparagine amide. The propeptide occupies Tyr-147 to Gln-152.

It belongs to the NmU family. In terms of tissue distribution, expressed in the CNS, spleen and testis. Specifically expressed in the suprachiasmatic nuclei (SCN) of the hypothalamus.

It localises to the secreted. Functionally, implicated in the regulation of circadian rhythms through autocrine and/or paracrine actions. Stimulates the contraction of rectum and elevation of blood pressure. This chain is Neuromedin-S (Nms), found in Rattus norvegicus (Rat).